The sequence spans 894 residues: Probable cytoplasmic aconitate hydratase (894 aa).

Residues glutamine 87 and 207–209 (DSH) contribute to the substrate site. Positions 438, 504, and 507 each coordinate [4Fe-4S] cluster. Substrate contacts are provided by residues arginine 537, arginine 542, and 781–782 (SR).

This sequence belongs to the aconitase/IPM isomerase family. The cofactor is [4Fe-4S] cluster.

It localises to the cytoplasm. The protein resides in the cytosol. It carries out the reaction citrate = D-threo-isocitrate. Functionally, catalyzes the isomerization of citrate to isocitrate via cis-aconitate. This is Probable cytoplasmic aconitate hydratase (aco1) from Dictyostelium discoideum (Social amoeba).